The primary structure comprises 258 residues: Imidazole glycerol phosphate synthase subunit HisF (258 aa).

Catalysis depends on residues Asp11 and Asp130.

This sequence belongs to the HisA/HisF family. In terms of assembly, heterodimer of HisH and HisF.

It is found in the cytoplasm. The enzyme catalyses 5-[(5-phospho-1-deoxy-D-ribulos-1-ylimino)methylamino]-1-(5-phospho-beta-D-ribosyl)imidazole-4-carboxamide + L-glutamine = D-erythro-1-(imidazol-4-yl)glycerol 3-phosphate + 5-amino-1-(5-phospho-beta-D-ribosyl)imidazole-4-carboxamide + L-glutamate + H(+). Its pathway is amino-acid biosynthesis; L-histidine biosynthesis; L-histidine from 5-phospho-alpha-D-ribose 1-diphosphate: step 5/9. IGPS catalyzes the conversion of PRFAR and glutamine to IGP, AICAR and glutamate. The HisF subunit catalyzes the cyclization activity that produces IGP and AICAR from PRFAR using the ammonia provided by the HisH subunit. The sequence is that of Imidazole glycerol phosphate synthase subunit HisF from Salmonella arizonae (strain ATCC BAA-731 / CDC346-86 / RSK2980).